The sequence spans 253 residues: uncharacterized protein (253 aa).

The protein belongs to the methyltransferase superfamily.

This is an uncharacterized protein from Mycobacterium avium (strain 104).